Reading from the N-terminus, the 221-residue chain is Pectate lyase C (221 aa).

An N-terminal signal peptide occupies residues 1–28 (MKRLAGTVILSGLLVCGFGQALPEKALA).

It belongs to the polysaccharide lyase 3 family. Requires Ca(2+) as cofactor.

It is found in the secreted. The enzyme catalyses Eliminative cleavage of (1-&gt;4)-alpha-D-galacturonan to give oligosaccharides with 4-deoxy-alpha-D-galact-4-enuronosyl groups at their non-reducing ends.. It carries out the reaction Eliminative cleavage of (1-&gt;4)-alpha-D-galacturonan methyl ester to give oligosaccharides with 4-deoxy-6-O-methyl-alpha-D-galact-4-enuronosyl groups at their non-reducing ends.. The protein operates within glycan metabolism; pectin degradation; 2-dehydro-3-deoxy-D-gluconate from pectin: step 2/5. In terms of biological role, catalyzes the depolymerization of both polygalacturonate and pectins of methyl esterification degree from 22 to 89%, with an endo mode of action. In contrast to the majority of pectate lyases, displays high activity on highly methylated pectins. The protein is Pectate lyase C (pelC) of Bacillus licheniformis (strain ATCC 14580 / DSM 13 / JCM 2505 / CCUG 7422 / NBRC 12200 / NCIMB 9375 / NCTC 10341 / NRRL NRS-1264 / Gibson 46).